We begin with the raw amino-acid sequence, 127 residues long: Small ribosomal subunit protein eS6 (127 aa).

The protein belongs to the eukaryotic ribosomal protein eS6 family.

This is Small ribosomal subunit protein eS6 from Picrophilus torridus (strain ATCC 700027 / DSM 9790 / JCM 10055 / NBRC 100828 / KAW 2/3).